The chain runs to 357 residues: uncharacterized protein (357 aa).

The HEAT repeat unit spans residues 173–211 (VLPILEKLMQDESLYVRKSVANNLNDISKTHPHLLRKVA).

This is an uncharacterized protein from Bacillus subtilis (strain 168).